Here is a 350-residue protein sequence, read N- to C-terminus: Renin receptor (350 aa).

The signal sequence occupies residues 1–17 (MAVLVVLLSSLVSSALA). The Extracellular segment spans residues 18 to 302 (NEFSILRSPG…YNLAYKYNLE (285 aa)). Residues 303–323 (YSVVFNLVLWIMTGLALAVII) traverse the membrane as a helical segment. Residues 324–350 (TSYNIWNMDPGYDSIIYRMTNQKIRMD) are Cytoplasmic-facing. The Mediates retrograde transport to the ER motif lies at 346–350 (KIRMD).

In terms of assembly, interacts with renin. Accessory component of the multisubunit proton-transporting vacuolar (V)-ATPase protein pump. Interacts (via N-terminus) with ATP6AP1 (via N-terminus). Interacts with ATP6V0D1; ATP6V0D1 is a V-ATPase complex subunit and the interaction promotes V-ATPase complex assembly. Interacts with TMEM9; TMEM9 is a V-ATPase assembly regulator and the interaction induces the interaction with ATP6V0D1. Interacts with VMA21 (via N-terminus); VMA21 is a V-ATPase accessory component. In terms of processing, phosphorylated. Proteolytically cleaved by a furin-like convertase in the trans-Golgi network to generate N- and C-terminal fragments. As to expression, expressed in the brain.

Its subcellular location is the endoplasmic reticulum membrane. The protein localises to the lysosome membrane. It is found in the cytoplasmic vesicle. It localises to the autophagosome membrane. The protein resides in the cell projection. Its subcellular location is the dendritic spine membrane. The protein localises to the axon. It is found in the endosome membrane. It localises to the clathrin-coated vesicle membrane. The protein resides in the secretory vesicle. Its subcellular location is the synaptic vesicle membrane. Functionally, multifunctional protein which functions as a renin, prorenin cellular receptor and is involved in the assembly of the lysosomal proton-transporting V-type ATPase (V-ATPase) and the acidification of the endo-lysosomal system. May mediate renin-dependent cellular responses by activating ERK1 and ERK2. By increasing the catalytic efficiency of renin in AGT/angiotensinogen conversion to angiotensin I, may also play a role in the renin-angiotensin system (RAS). Through its function in V-type ATPase (v-ATPase) assembly and acidification of the lysosome it regulates protein degradation and may control different signaling pathways important for proper brain development, synapse morphology and synaptic transmission. This Rattus norvegicus (Rat) protein is Renin receptor (Atp6ap2).